Reading from the N-terminus, the 850-residue chain is Tripartite terminase subunit 1 (850 aa).

A C3H1-type zinc finger spans residues 191-219 (CAQCYEELTIIPNQGRSLNKRLQGLLCNH). Residues 438–489 (GTTLMTASNSSNSSTHSQRNNGGGGRARGGGKKVVGGGVNGQDGDGSENGLR) form a disordered region. A compositionally biased stretch (low complexity) spans 439-457 (TTLMTASNSSNSSTHSQRN). The segment covering 458-481 (NGGGGRARGGGKKVVGGGVNGQDG) has biased composition (gly residues). 709–716 (YNETFGKQ) provides a ligand contact to ATP. The tract at residues 801–831 (WLPSPYPSSSTAGVSRRVRATRKRPRRASSL) is disordered. Basic residues predominate over residues 816-827 (RRVRATRKRPRR). Residues 822 to 827 (RKRPRR) carry the Nuclear localization signal motif.

This sequence belongs to the herpesviridae TRM1 protein family. In terms of assembly, associates with TRM2 and TRM3 to form the tripartite terminase complex. Interacts with portal protein.

The protein resides in the host nucleus. In terms of biological role, component of the molecular motor that translocates viral genomic DNA in empty capsid during DNA packaging. Forms a tripartite terminase complex together with TRM2 and TRM3 in the host cytoplasm. Once the complex reaches the host nucleus, it interacts with the capsid portal vertex. This portal forms a ring in which genomic DNA is translocated into the capsid. TRM1 carries an endonuclease activity that plays an important role for the cleavage of concatemeric viral DNA into unit length genomes. The sequence is that of Tripartite terminase subunit 1 from Homo sapiens (Human).